The chain runs to 652 residues: NADH-ubiquinone oxidoreductase chain 5 (652 aa).

Transmembrane regions (helical) follow at residues 1–21, 30–50, 72–92, 119–139, 140–160, 177–197, 200–220, 241–261, 274–294, 301–319, 331–351, 365–385, 403–423, 454–474, 505–525, and 619–639; these read MYLSIIILPLLGCIVSGFLGR, LITCSNVVITTILSILAFIEV, IIWGFQFDSLTVSMLIPVLII, LFTFMMIILVTANNYLLMFVG, WEGVGVCSYLLVSFWFTRIAA, FLTIGMFAILWSLGNLDYSTV, LAPYINSKVVLIIGICLLIGA, TPVSALIHAATMVTAGVYLLM, LLLCLWLGAITTVFSSLIGLF, VIAYSTMSQLGMMVIAIGL, NHAFYKALLFLGAGSVIHAVA, FLPLTYSVMLIASLSLVAFPF, FSFSGVAVYIIATIGAIFTTL, LFLTLPLIILAIFSIFFGFIT, FAVPVLFKLLPFIFTISFSII, and LYILVAFILYLLYNYLSFNFL.

The protein belongs to the complex I subunit 5 family.

It is found in the mitochondrion inner membrane. It carries out the reaction a ubiquinone + NADH + 5 H(+)(in) = a ubiquinol + NAD(+) + 4 H(+)(out). In terms of biological role, core subunit of the mitochondrial membrane respiratory chain NADH dehydrogenase (Complex I) that is believed to belong to the minimal assembly required for catalysis. Complex I functions in the transfer of electrons from NADH to the respiratory chain. The immediate electron acceptor for the enzyme is believed to be ubiquinone. This chain is NADH-ubiquinone oxidoreductase chain 5 (ND5), found in Podospora anserina (strain S / ATCC MYA-4624 / DSM 980 / FGSC 10383) (Pleurage anserina).